We begin with the raw amino-acid sequence, 473 residues long: Cysteine--tRNA ligase (473 aa).

Residue C28 participates in Zn(2+) binding. The short motif at 30-40 is the 'HIGH' region element; it reads PTVYNYIHIGN. Zn(2+) contacts are provided by C210, H235, and E239. The 'KMSKS' region motif lies at 267 to 271; the sequence is KMSKS. Residue K270 participates in ATP binding.

It belongs to the class-I aminoacyl-tRNA synthetase family. Monomer. Zn(2+) serves as cofactor.

It localises to the cytoplasm. The catalysed reaction is tRNA(Cys) + L-cysteine + ATP = L-cysteinyl-tRNA(Cys) + AMP + diphosphate. The sequence is that of Cysteine--tRNA ligase from Fusobacterium nucleatum subsp. nucleatum (strain ATCC 25586 / DSM 15643 / BCRC 10681 / CIP 101130 / JCM 8532 / KCTC 2640 / LMG 13131 / VPI 4355).